Here is a 61-residue protein sequence, read N- to C-terminus: Metallothionein-1H (61 aa).

The residue at position 1 (methionine 1) is an N-acetylmethionine. The tract at residues 1-29 (MDPNCSCEAGGSCACAGSCKCKKCKCTSC) is beta. Cysteine 5, cysteine 7, cysteine 13, cysteine 15, cysteine 19, cysteine 21, cysteine 24, cysteine 26, cysteine 29, cysteine 33, cysteine 34, cysteine 36, cysteine 37, cysteine 41, cysteine 44, cysteine 48, cysteine 50, and cysteine 57 together coordinate a divalent metal cation. The segment at 30 to 61 (KKSCCSCCPLGCAKCAQGCICKGASEKCSCCA) is alpha. Serine 58 bears the Phosphoserine mark. Residues cysteine 59 and cysteine 60 each coordinate a divalent metal cation.

Belongs to the metallothionein superfamily. Type 1 family. Monomer.

In terms of biological role, metallothioneins have a high content of cysteine residues that bind various heavy metals; these proteins are transcriptionally regulated by both heavy metals and glucocorticoids. This is Metallothionein-1H (MT1H) from Homo sapiens (Human).